The following is a 61-amino-acid chain: Small ribosomal subunit protein uS14 (61 aa).

Cys24, Cys27, Cys40, and Cys43 together coordinate Zn(2+).

It belongs to the universal ribosomal protein uS14 family. Zinc-binding uS14 subfamily. Part of the 30S ribosomal subunit. Contacts proteins S3 and S10. The cofactor is Zn(2+).

Binds 16S rRNA, required for the assembly of 30S particles and may also be responsible for determining the conformation of the 16S rRNA at the A site. The chain is Small ribosomal subunit protein uS14 from Treponema pallidum (strain Nichols).